A 315-amino-acid chain; its full sequence is Tetraacyldisaccharide 4'-kinase (315 aa).

45 to 52 (SVGGSGKT) contacts ATP.

Belongs to the LpxK family.

It carries out the reaction a lipid A disaccharide + ATP = a lipid IVA + ADP + H(+). Its pathway is glycolipid biosynthesis; lipid IV(A) biosynthesis; lipid IV(A) from (3R)-3-hydroxytetradecanoyl-[acyl-carrier-protein] and UDP-N-acetyl-alpha-D-glucosamine: step 6/6. In terms of biological role, transfers the gamma-phosphate of ATP to the 4'-position of a tetraacyldisaccharide 1-phosphate intermediate (termed DS-1-P) to form tetraacyldisaccharide 1,4'-bis-phosphate (lipid IVA). This is Tetraacyldisaccharide 4'-kinase from Aquifex aeolicus (strain VF5).